A 652-amino-acid polypeptide reads, in one-letter code: Translation factor guf1, mitochondrial (652 aa).

The N-terminal 44 residues, 1–44, are a transit peptide targeting the mitochondrion; that stretch reads MSIFRLSRTFSLETCLKSSSFKIRWRFFSVSYASRKLASEDNKP. Residues 56-237 enclose the tr-type G domain; it reads NRVRNWAVIA…EIIQKIPPPK (182 aa). GTP is bound by residues 65-72, 130-134, and 184-187; these read AHIDHGKS, DTPGH, and NKVD.

It belongs to the TRAFAC class translation factor GTPase superfamily. Classic translation factor GTPase family. LepA subfamily.

It localises to the mitochondrion inner membrane. The catalysed reaction is GTP + H2O = GDP + phosphate + H(+). Promotes mitochondrial protein synthesis. May act as a fidelity factor of the translation reaction, by catalyzing a one-codon backward translocation of tRNAs on improperly translocated ribosomes. Binds to mitochondrial ribosomes in a GTP-dependent manner. This chain is Translation factor guf1, mitochondrial (guf1), found in Schizosaccharomyces pombe (strain 972 / ATCC 24843) (Fission yeast).